The primary structure comprises 909 residues: Protein NLP1 (909 aa).

Disordered stretches follow at residues 51 to 71 (KSLK…DNSP), 536 to 556 (KEDP…PVPN), 568 to 605 (ASTP…RAKT), and 690 to 745 (NSPN…ENTG). Over residues 55-70 (QTEQSPSASTAMNDNS) the composition is skewed to polar residues. Residues 595 to 676 (RRPGEKKRAK…MDSVQGAQGS (82 aa)) form the RWP-RK domain. The segment covering 690–716 (NSPNMSSNGPSLKSNEQPSHLNAQTDN) has biased composition (polar residues). Residues 725-745 (RSPSSSCSKSSGSSNNNENTG) are compositionally biased toward low complexity. Residues 811–894 (AIKVKATFGE…HTIKISLNEA (84 aa)) enclose the PB1 domain.

Its subcellular location is the nucleus. Probable transcription factor. The protein is Protein NLP1 (NLP1) of Arabidopsis thaliana (Mouse-ear cress).